A 779-amino-acid chain; its full sequence is Protein zer-1 homolog (779 aa).

Ala2 is subject to N-acetylalanine. LRR repeat units lie at residues 226–245 (SLVL…IVQL), 246–281 (HKLR…KLTR), and 291–315 (LGNL…KTDE). ARM repeat units lie at residues 440 to 480 (RSEQ…NFSI), 524 to 569 (DNDH…NITD), 571 to 613 (TPDN…NVAE), 615 to 656 (KELR…HIMF), and 727 to 769 (PDKY…HCSN).

It belongs to the zyg-11 family. In terms of assembly, interacts with the ELOC-ELOB/Elongin BC complex. Part of an E3 ubiquitin ligase complex including ZER1, CUL2 and Elongin BC.

Serves as substrate adapter subunit in the E3 ubiquitin ligase complex ZYG11B-CUL2-Elongin BC. Acts redudantly with ZYG11B to target substrates bearing N-terminal glycine degrons for proteasomal degradation. Involved in the clearance of proteolytic fragments generated by caspase cleavage during apoptosis since N-terminal glycine degrons are strongly enriched at caspase cleavage sites. Also important in the quality control of protein N-myristoylation in which N-terminal glycine degrons are conditionally exposed after a failure of N-myristoylation. This is Protein zer-1 homolog from Mus musculus (Mouse).